The following is a 1574-amino-acid chain: Pentafunctional AROM polypeptide (1574 aa).

The 3-dehydroquinate synthase stretch occupies residues 1 to 384 (MSCSNNTEPT…HEPRATTVED (384 aa)). NAD(+)-binding positions include 49–51 (DTN), 85–88 (EISK), 116–118 (GGV), and Asp121. A 7-phospho-2-dehydro-3-deoxy-D-arabino-heptonate-binding site is contributed by Arg132. 141 to 142 (TT) contacts NAD(+). Positions 148 and 154 each coordinate 7-phospho-2-dehydro-3-deoxy-D-arabino-heptonate. Lys163 is a binding site for NAD(+). Asn164 serves as a coordination point for 7-phospho-2-dehydro-3-deoxy-D-arabino-heptonate. Residues 181 to 184 (FLET) and Asn192 each bind NAD(+). Glu196 provides a ligand contact to Zn(2+). Residues 196 to 199 (EVIK) and Lys250 each bind 7-phospho-2-dehydro-3-deoxy-D-arabino-heptonate. The active-site Proton acceptor; for 3-dehydroquinate synthase activity is the Glu260. Residues 264 to 268 (RNLLN) and His271 contribute to the 7-phospho-2-dehydro-3-deoxy-D-arabino-heptonate site. His271 serves as a coordination point for Zn(2+). His275 (proton acceptor; for 3-dehydroquinate synthase activity) is an active-site residue. The 7-phospho-2-dehydro-3-deoxy-D-arabino-heptonate site is built by His287 and Lys356. A Zn(2+)-binding site is contributed by His287. The interval 397–837 (ITPGVSTKLA…WDTLSQSFGL (441 aa)) is EPSP synthase. The For EPSP synthase activity role is filled by Cys819. The tract at residues 858-1052 (TRSVFIVGMR…TAKEQSFFVS (195 aa)) is shikimate kinase. ATP is bound at residue 865–872 (GMRGAGKT). The 3-dehydroquinase stretch occupies residues 1053–1266 (LTVPSVDSAV…AAPGQLSAAE (214 aa)). The active-site Proton acceptor; for 3-dehydroquinate dehydratase activity is the His1169. Lys1197 serves as the catalytic Schiff-base intermediate with substrate; for 3-dehydroquinate dehydratase activity. The tract at residues 1279–1574 (AQSFHLFGKP…NGDEIPTSTD (296 aa)) is shikimate dehydrogenase.

This sequence in the N-terminal section; belongs to the sugar phosphate cyclases superfamily. Dehydroquinate synthase family. It in the 2nd section; belongs to the EPSP synthase family. In the 3rd section; belongs to the shikimate kinase family. The protein in the 4th section; belongs to the type-I 3-dehydroquinase family. This sequence in the C-terminal section; belongs to the shikimate dehydrogenase family. As to quaternary structure, homodimer. Requires Zn(2+) as cofactor.

It is found in the cytoplasm. The enzyme catalyses 7-phospho-2-dehydro-3-deoxy-D-arabino-heptonate = 3-dehydroquinate + phosphate. It catalyses the reaction 3-dehydroquinate = 3-dehydroshikimate + H2O. The catalysed reaction is shikimate + NADP(+) = 3-dehydroshikimate + NADPH + H(+). It carries out the reaction shikimate + ATP = 3-phosphoshikimate + ADP + H(+). The enzyme catalyses 3-phosphoshikimate + phosphoenolpyruvate = 5-O-(1-carboxyvinyl)-3-phosphoshikimate + phosphate. Its pathway is metabolic intermediate biosynthesis; chorismate biosynthesis; chorismate from D-erythrose 4-phosphate and phosphoenolpyruvate: step 2/7. It functions in the pathway metabolic intermediate biosynthesis; chorismate biosynthesis; chorismate from D-erythrose 4-phosphate and phosphoenolpyruvate: step 3/7. It participates in metabolic intermediate biosynthesis; chorismate biosynthesis; chorismate from D-erythrose 4-phosphate and phosphoenolpyruvate: step 4/7. The protein operates within metabolic intermediate biosynthesis; chorismate biosynthesis; chorismate from D-erythrose 4-phosphate and phosphoenolpyruvate: step 5/7. Its pathway is metabolic intermediate biosynthesis; chorismate biosynthesis; chorismate from D-erythrose 4-phosphate and phosphoenolpyruvate: step 6/7. In terms of biological role, the AROM polypeptide catalyzes 5 consecutive enzymatic reactions in prechorismate polyaromatic amino acid biosynthesis. In Verticillium alfalfae (strain VaMs.102 / ATCC MYA-4576 / FGSC 10136) (Verticillium wilt of alfalfa), this protein is Pentafunctional AROM polypeptide.